Here is a 74-residue protein sequence, read N- to C-terminus: STKNGRDSNSKRLGVKVYGNQPIKKGGIIIRQRGLTFKPGINVAVGKDYTLFALQEGDVKFETIANRKFVSVIK.

It belongs to the bacterial ribosomal protein bL27 family.

It is found in the plastid. The protein localises to the chloroplast. The sequence is that of Large ribosomal subunit protein bL27c (rpl27) from Pleurochrysis haptonemofera (Unicellular marine alga).